A 432-amino-acid chain; its full sequence is 3-phosphoshikimate 1-carboxyvinyltransferase (432 aa).

Lysine 22, serine 23, and arginine 27 together coordinate 3-phosphoshikimate. Lysine 22 contributes to the phosphoenolpyruvate binding site. Residues glycine 96 and arginine 127 each contribute to the phosphoenolpyruvate site. Residues serine 173, serine 174, glutamine 175, serine 201, aspartate 317, asparagine 340, and lysine 344 each coordinate 3-phosphoshikimate. Position 175 (glutamine 175) interacts with phosphoenolpyruvate. The active-site Proton acceptor is the aspartate 317. Positions 348, 392, and 417 each coordinate phosphoenolpyruvate.

The protein belongs to the EPSP synthase family. As to quaternary structure, monomer.

The protein localises to the cytoplasm. It catalyses the reaction 3-phosphoshikimate + phosphoenolpyruvate = 5-O-(1-carboxyvinyl)-3-phosphoshikimate + phosphate. It functions in the pathway metabolic intermediate biosynthesis; chorismate biosynthesis; chorismate from D-erythrose 4-phosphate and phosphoenolpyruvate: step 6/7. Catalyzes the transfer of the enolpyruvyl moiety of phosphoenolpyruvate (PEP) to the 5-hydroxyl of shikimate-3-phosphate (S3P) to produce enolpyruvyl shikimate-3-phosphate and inorganic phosphate. This Mannheimia haemolytica (Pasteurella haemolytica) protein is 3-phosphoshikimate 1-carboxyvinyltransferase.